The primary structure comprises 647 residues: Threonine--tRNA ligase (647 aa).

Residues 1–61 (MIKITFPDGA…TEDGSIEIVT (61 aa)) enclose the TGS domain. The segment at 242 to 540 (DHRKLGKELD…LIENYKGAFP (299 aa)) is catalytic. Zn(2+) is bound by residues Cys-336, His-387, and His-517.

The protein belongs to the class-II aminoacyl-tRNA synthetase family. In terms of assembly, homodimer. Zn(2+) serves as cofactor.

The protein resides in the cytoplasm. The enzyme catalyses tRNA(Thr) + L-threonine + ATP = L-threonyl-tRNA(Thr) + AMP + diphosphate + H(+). Catalyzes the attachment of threonine to tRNA(Thr) in a two-step reaction: L-threonine is first activated by ATP to form Thr-AMP and then transferred to the acceptor end of tRNA(Thr). Also edits incorrectly charged L-seryl-tRNA(Thr). This Streptococcus gordonii (strain Challis / ATCC 35105 / BCRC 15272 / CH1 / DL1 / V288) protein is Threonine--tRNA ligase.